The chain runs to 77 residues: Large ribosomal subunit protein bL28 (77 aa).

A disordered region spans residues 1–25; the sequence is MARVCQVTGKAPMSGNNVSHANNKT.

This sequence belongs to the bacterial ribosomal protein bL28 family.

The chain is Large ribosomal subunit protein bL28 from Paraburkholderia xenovorans (strain LB400).